The primary structure comprises 121 residues: MVAQLYHHLTILIASIYIIFFVNAAPTLYEDDEEDFNSTEYDVFLDSDSFQFPRRNSSCNCTREEATRTLLEALKRALQIIAGYINETDTEELPTYPPTMTTPLETTPLDTSPPVLPSAIP.

Residues 9–29 (LTILIASIYIIFFVNAAPTLY) form a helical membrane-spanning segment. The disordered stretch occupies residues 91–121 (EELPTYPPTMTTPLETTPLDTSPPVLPSAIP). A compositionally biased stretch (low complexity) spans 98 to 113 (PTMTTPLETTPLDTSP).

Its subcellular location is the host membrane. This is an uncharacterized protein from Alcelaphine herpesvirus 1 (strain C500) (AlHV-1).